Consider the following 389-residue polypeptide: viridiflorene synthase Agr2 (389 aa).

An N-terminal signal peptide occupies residues Met1 to Ala15. Positions 128, 263, 267, and 271 each coordinate Mg(2+). Positions Asp128–Asp132 match the DDXXD motif motif. Positions 360 and 361 each coordinate (2E,6E)-farnesyl diphosphate.

Belongs to the terpene synthase family. The cofactor is Mg(2+).

The catalysed reaction is (2E,6E)-farnesyl diphosphate = viridiflorene + diphosphate. Its function is as follows. Terpene cyclase that catalyzes the cyclization of farnesyl diphosphate (FPP) to viridiflorene. The sequence is that of viridiflorene synthase Agr2 from Cyclocybe aegerita (Black poplar mushroom).